The chain runs to 702 residues: Elongation factor G (702 aa).

The tr-type G domain maps to 8–290 (ERYRNIGISA…AVIDYLPSPV (283 aa)). GTP contacts are provided by residues 17–24 (AHIDAGKT), 88–92 (DTPGH), and 142–145 (NKMD).

The protein belongs to the TRAFAC class translation factor GTPase superfamily. Classic translation factor GTPase family. EF-G/EF-2 subfamily.

The protein resides in the cytoplasm. Catalyzes the GTP-dependent ribosomal translocation step during translation elongation. During this step, the ribosome changes from the pre-translocational (PRE) to the post-translocational (POST) state as the newly formed A-site-bound peptidyl-tRNA and P-site-bound deacylated tRNA move to the P and E sites, respectively. Catalyzes the coordinated movement of the two tRNA molecules, the mRNA and conformational changes in the ribosome. This Acidovorax sp. (strain JS42) protein is Elongation factor G.